The sequence spans 343 residues: Glyceraldehyde-3-phosphate dehydrogenase 1 (343 aa).

NAD(+) contacts are provided by residues 13–14 (RI), Asp-35, Arg-79, and Ser-121. D-glyceraldehyde 3-phosphate contacts are provided by residues 154 to 156 (SCT), Thr-185, 214 to 215 (TG), and Arg-237. Cys-155 (nucleophile) is an active-site residue. Asn-319 contacts NAD(+).

Belongs to the glyceraldehyde-3-phosphate dehydrogenase family. As to quaternary structure, homotetramer.

It is found in the cytoplasm. It carries out the reaction D-glyceraldehyde 3-phosphate + phosphate + NAD(+) = (2R)-3-phospho-glyceroyl phosphate + NADH + H(+). It functions in the pathway carbohydrate degradation; glycolysis; pyruvate from D-glyceraldehyde 3-phosphate: step 1/5. Catalyzes the oxidative phosphorylation of glyceraldehyde 3-phosphate (G3P) to 1,3-bisphosphoglycerate (BPG) using the cofactor NAD. The first reaction step involves the formation of a hemiacetal intermediate between G3P and a cysteine residue, and this hemiacetal intermediate is then oxidized to a thioester, with concomitant reduction of NAD to NADH. The reduced NADH is then exchanged with the second NAD, and the thioester is attacked by a nucleophilic inorganic phosphate to produce BPG. The protein is Glyceraldehyde-3-phosphate dehydrogenase 1 (gap1) of Nostoc sp. (strain PCC 7120 / SAG 25.82 / UTEX 2576).